The sequence spans 267 residues: Undecaprenyl-diphosphatase (267 aa).

8 consecutive transmembrane segments (helical) span residues 1-21, 39-59, 87-107, 111-131, 149-169, 189-209, 218-238, and 246-266; these read MTYF…FLPI, QGLA…VMYF, WLII…KDFI, LRSA…LWWV, ALFL…RSGI, FLMS…KLAL, FLGT…HFFL, and MTPF…WLAL.

This sequence belongs to the UppP family.

It localises to the cell inner membrane. It catalyses the reaction di-trans,octa-cis-undecaprenyl diphosphate + H2O = di-trans,octa-cis-undecaprenyl phosphate + phosphate + H(+). In terms of biological role, catalyzes the dephosphorylation of undecaprenyl diphosphate (UPP). Confers resistance to bacitracin. This Aliivibrio salmonicida (strain LFI1238) (Vibrio salmonicida (strain LFI1238)) protein is Undecaprenyl-diphosphatase.